The primary structure comprises 90 residues: Cell division protein CrgA (90 aa).

The tract at residues 1–25 (MPKARVTKNETAPVSSNPSANRTPV) is disordered. Residues 9–22 (NETAPVSSNPSANR) show a composition bias toward polar residues. 2 consecutive transmembrane segments (helical) span residues 38-58 (VIMF…YLVG) and 67-87 (LGAW…LMTM).

Belongs to the CrgA family.

The protein resides in the cell membrane. In terms of biological role, involved in cell division. In Corynebacterium glutamicum (strain ATCC 13032 / DSM 20300 / JCM 1318 / BCRC 11384 / CCUG 27702 / LMG 3730 / NBRC 12168 / NCIMB 10025 / NRRL B-2784 / 534), this protein is Cell division protein CrgA.